A 117-amino-acid chain; its full sequence is SPbeta prophage-derived uncharacterized protein YosL (117 aa).

The sequence is that of SPbeta prophage-derived uncharacterized protein YosL (yosL) from Bacillus subtilis (strain 168).